The chain runs to 580 residues: F-box only protein 24 (580 aa).

The F-box domain occupies 36–82 (PISIQLFPPELVEHIISFLPVRDLVALGQTCRYFHEVCDAEGVWRRI). One copy of the RCC1 repeat lies at 376 to 425 (GRIFMQGNNRYGQLGTGDKMDRGEPTQVRYLQRPITLWCGLNHSLVLSQS).

Directly interacts with SKP1 and CUL1.

Functionally, substrate-recognition component of the SCF (SKP1-CUL1-F-box protein)-type E3 ubiquitin ligase complex. The chain is F-box only protein 24 (FBXO24) from Macaca fascicularis (Crab-eating macaque).